We begin with the raw amino-acid sequence, 351 residues long: sn-1 oleoyl-lipid 12-desaturase (351 aa).

2 consecutive transmembrane segments (helical) span residues 46 to 66 (WASVLITLGAIAVGYLGIIYL) and 68 to 88 (WYCLPITWIWTGTALTGAFVV). The Histidine box-1 motif lies at 90–94 (HDCGH). Residues 102-122 (WVNDLVGHIAFAPLIYPFHSW) traverse the membrane as a helical segment. The Histidine box-2 motif lies at 126–130 (HDHHH). Helical transmembrane passes span 199–219 (IAVVFLFAAIAFPALIITTGV) and 222–242 (FVKFWLMPWLVYHFWMSTFTI). The short motif at 290 to 294 (HHLSV) is the Histidine box-3 element.

This sequence belongs to the fatty acid desaturase type 2 family. Fe(2+) serves as cofactor.

Its subcellular location is the membrane. The catalysed reaction is a 1-[(9Z)-octadecenoyl]-2-acyl-glycerolipid + 2 reduced [2Fe-2S]-[ferredoxin] + O2 + 2 H(+) = a 1-[(9Z,12Z)-octadecdienoyl]-2-acyl-glycerolipid + 2 oxidized [2Fe-2S]-[ferredoxin] + 2 H2O. The protein operates within lipid metabolism; polyunsaturated fatty acid biosynthesis. Desaturase involved in fatty acid biosynthesis. Introduces a double bond at carbon 12 of oleoyl groups (18:1) attached to the sn-1 position of the glycerol moiety of membrane glycerolipids. This enzyme is involved in chilling tolerance because the phase transition temperature of lipids of cellular membranes depends on the degree of unsaturation of fatty acids of the membrane lipids. The sequence is that of sn-1 oleoyl-lipid 12-desaturase from Synechocystis sp. (strain ATCC 27184 / PCC 6803 / Kazusa).